Consider the following 389-residue polypeptide: Succinate--CoA ligase [ADP-forming] subunit beta (389 aa).

Residues 9–236 (RDLFEKHGVP…KTTADPLEEK (228 aa)) form the ATP-grasp domain. Residues lysine 45, 52–54 (GRG), alanine 94, and glutamate 99 contribute to the ATP site. 2 residues coordinate Mg(2+): asparagine 191 and aspartate 205. Substrate contacts are provided by residues asparagine 256 and 318-320 (GIT).

The protein belongs to the succinate/malate CoA ligase beta subunit family. Heterotetramer of two alpha and two beta subunits. Requires Mg(2+) as cofactor.

It catalyses the reaction succinate + ATP + CoA = succinyl-CoA + ADP + phosphate. The enzyme catalyses GTP + succinate + CoA = succinyl-CoA + GDP + phosphate. The protein operates within carbohydrate metabolism; tricarboxylic acid cycle; succinate from succinyl-CoA (ligase route): step 1/1. Its function is as follows. Succinyl-CoA synthetase functions in the citric acid cycle (TCA), coupling the hydrolysis of succinyl-CoA to the synthesis of either ATP or GTP and thus represents the only step of substrate-level phosphorylation in the TCA. The beta subunit provides nucleotide specificity of the enzyme and binds the substrate succinate, while the binding sites for coenzyme A and phosphate are found in the alpha subunit. The polypeptide is Succinate--CoA ligase [ADP-forming] subunit beta (Kocuria rhizophila (strain ATCC 9341 / DSM 348 / NBRC 103217 / DC2201)).